Here is a 41-residue protein sequence, read N- to C-terminus: Large ribosomal subunit protein bL36B (41 aa).

This sequence belongs to the bacterial ribosomal protein bL36 family.

The chain is Large ribosomal subunit protein bL36B from Actinobacillus pleuropneumoniae serotype 5b (strain L20).